A 586-amino-acid chain; its full sequence is Retron Ec67 protein (586 aa).

A Reverse transcriptase domain is found at 29–262 (FLTNVLYRIG…SRQEVTGLTV (234 aa)). 3 residues coordinate Mg(2+): aspartate 120, aspartate 201, and aspartate 202.

This sequence belongs to the bacterial reverse transcriptase family.

It catalyses the reaction DNA(n) + a 2'-deoxyribonucleoside 5'-triphosphate = DNA(n+1) + diphosphate. The enzyme catalyses Endonucleolytic cleavage to 5'-phosphomonoester.. Functionally, reverse transcriptase (RT) component of antiviral defense system retron Ec67, minimally composed of a non-coding RNA (ncRNA) and this RT. Expression of these 2 elements confers protection against bacteriophage T5. At multiplicity of infection (MOI) of 0.02 cultures grow normally when infected with T5 without collapsing, at MOI 2 cultures enter growth stasis. Responsible for synthesis of msDNA-Ec67 (a branched molecule with RNA linked by a 2',5'-phosphodiester bond to ssDNA). The retron transcript serves as primer (from a conserved internal G residue) and template for the reaction, and codes for the RT. Can use other retrons as substrate (msDNA-Mx162 and msDNA-Ec86). Also able to synthesize DNA from a DNA template at least in vitro, although the enzyme is less active with a DNA template. This Escherichia coli protein is Retron Ec67 protein.